The following is a 552-amino-acid chain: HTH-type transcriptional regulator SgrR (552 aa).

Residues 1–116 form the HTH marR-type domain; the sequence is MPSARLQQQF…LVSHLGRSFR (116 aa). The H-T-H motif DNA-binding region spans 26 to 49; the sequence is LNELAALLSCSRRHMRTLLNTMQD. The segment at 163 to 492 is solute-binding; sequence ELEADIAHHW…IDWQADAARW (330 aa).

Activates the small RNA gene sgrS under glucose-phosphate stress conditions as well as yfdZ. Represses its own transcription under both stress and non-stress conditions. Might act as a sensor of the intracellular accumulation of phosphoglucose by binding these molecules in its C-terminal solute-binding domain. In Shigella dysenteriae serotype 1 (strain Sd197), this protein is HTH-type transcriptional regulator SgrR.